Reading from the N-terminus, the 693-residue chain is Protein-glutamine gamma-glutamyltransferase E (693 aa).

Ala-2 bears the N-acetylalanine mark. Tyr-111 carries the phosphotyrosine modification. The residue at position 112 (Thr-112) is a Phosphothreonine. Ca(2+)-binding residues include Ala-222, Asn-225, Asn-227, Asp-228, and Asn-230. The active site involves Cys-273. Residues Asp-302, Asp-304, Asn-306, Ser-308, and Asp-325 each contribute to the Ca(2+) site. Active-site residues include His-331 and Asp-354. Residues Asn-394, Ser-416, Glu-444, and Glu-449 each contribute to the Ca(2+) site.

The protein belongs to the transglutaminase superfamily. Transglutaminase family. In terms of assembly, consists of two polypeptide chains, which are synthesized as a precursor form of a single polypeptide. The cofactor is Ca(2+). In terms of processing, activated by proteolytic processing. In vitro activation is commonly achieved by cleavage with dispase, a neutral bacterial protease. Dispase cleavage site was proposed to lie between Ser-470 and Ser-471 or between Pro-465 and Phe-466. Physiological activation may be catalyzed by CTSL and, to a lesser extent, by CTSS, but not by CTSB, CTSD nor CTSV.

Its subcellular location is the cytoplasm. The enzyme catalyses L-glutaminyl-[protein] + L-lysyl-[protein] = [protein]-L-lysyl-N(6)-5-L-glutamyl-[protein] + NH4(+). In terms of biological role, catalyzes the calcium-dependent formation of isopeptide cross-links between glutamine and lysine residues in various proteins, as well as the conjugation of polyamines to proteins. Involved in the formation of the cornified envelope (CE), a specialized component consisting of covalent cross-links of proteins beneath the plasma membrane of terminally differentiated keratinocytes. Catalyzes small proline-rich proteins (SPRR1 and SPRR2) and LOR cross-linking to form small interchain oligomers, which are further cross-linked by TGM1 onto the growing CE scaffold. In hair follicles, involved in cross-linking structural proteins to hardening the inner root sheath. This Homo sapiens (Human) protein is Protein-glutamine gamma-glutamyltransferase E (TGM3).